The sequence spans 140 residues: Arsenate reductase ArsI2 (140 aa).

Residue Cys-10 is the Nucleophile; cysteine thioarsenate intermediate of the active site.

It belongs to the ArsC family.

It carries out the reaction [glutaredoxin]-dithiol + arsenate + glutathione + H(+) = glutathionyl-S-S-[glutaredoxin] + arsenite + H2O. Functionally, catalyzes the reduction of arsenate [As(V)] to arsenite [As(III)]. Does not constitute the major arsenate reductase in cells: essential only in the absence of ArsC (AC P74313). This Synechocystis sp. (strain ATCC 27184 / PCC 6803 / Kazusa) protein is Arsenate reductase ArsI2.